A 223-amino-acid polypeptide reads, in one-letter code: Ribonuclease T (223 aa).

Residues 1 to 11 (MSDDHFDDEQE) show a composition bias toward acidic residues. The disordered stretch occupies residues 1–21 (MSDDHFDDEQEGSSGGPRHPM). The 175-residue stretch at 31–205 (VVVDVETGGF…YDTEKTAELF (175 aa)) folds into the Exonuclease domain. Residues Asp-34, Glu-36, His-192, and Asp-197 each contribute to the Mg(2+) site. The active-site Proton donor/acceptor is His-192.

It belongs to the RNase T family. Homodimer. The cofactor is Mg(2+).

In terms of biological role, trims short 3' overhangs of a variety of RNA species, leaving a one or two nucleotide 3' overhang. Responsible for the end-turnover of tRNA: specifically removes the terminal AMP residue from uncharged tRNA (tRNA-C-C-A). Also appears to be involved in tRNA biosynthesis. The polypeptide is Ribonuclease T (Pseudomonas fluorescens (strain ATCC BAA-477 / NRRL B-23932 / Pf-5)).